Consider the following 120-residue polypeptide: SAGA-associated factor 11 (120 aa).

Residues 40–60 (SLLNSSNSNTNSNTNGTIASN) show a composition bias toward low complexity. The tract at residues 40 to 82 (SLLNSSNSNTNSNTNGTIASNGGNGTTSDENNEIENSTIQDKS) is disordered. An SGF11-type zinc finger spans residues 93-114 (FRCLNCGRNIAGGRFASHISKC).

Belongs to the SGF11 family. In terms of assembly, component of the 1.8 MDa SAGA transcription coactivator-HAT complex. SAGA is built of 5 distinct domains with specialized functions. Within the SAGA complex, SUS1, SGF11, SGF73 and UBP8 form an additional subcomplex of SAGA called the DUB module (deubiquitination module). Interacts directly with SGF73, SUS1 and UBP8.

The protein resides in the nucleus. In terms of biological role, functions as a component of the transcription regulatory histone acetylation (HAT) complex SAGA. At the promoters, SAGA is required for recruitment of the basal transcription machinery. It influences RNA polymerase II transcriptional activity through different activities such as TBP interaction and promoter selectivity, interaction with transcription activators, and chromatin modification through histone acetylation and deubiquitination. SAGA acetylates nucleosomal histone H3 to some extent (to form H3K9ac, H3K14ac, H3K18ac and H3K23ac). SAGA interacts with DNA via upstream activating sequences (UASs). Involved in transcriptional regulation of a subset of SAGA-regulated genes. Within the SAGA complex, participates in a subcomplex, that specifically deubiquitinates histones H2B. In Candida albicans (strain SC5314 / ATCC MYA-2876) (Yeast), this protein is SAGA-associated factor 11.